The chain runs to 555 residues: Carboxysome assembly protein CcmM (555 aa).

The tract at residues 1-209 is has carbonic anhydrase (CA) activity; the sequence is MAVRSTAAPP…CIAPLRNDQV (209 aa). The active-site Proton donor/acceptor is the Glu-56. The Zn(2+) site is built by His-75, His-102, and His-107. Residues Cys-194 and Cys-200 are joined by a disulfide bond. The interval 223-315 is rbcS-like repeat 1, SSUL1; it reads SSEVASNSLG…RVLETIIQRP (93 aa). Disordered stretches follow at residues 323-351 and 441-464; these read TSFKAPASNTNGNGSYHSNGNGNGYSNGA and NGQVAPSSSPRTVVSASSASSGTA. 2 stretches are compositionally biased toward low complexity: residues 330-351 and 445-464; these read SNTNGNGSYHSNGNGNGYSNGA and APSSSPRTVVSASSASSGTA. Residues 347–440 form a rbcS-like repeat 2, SSUL2 region; sequence YSNGATSGKV…RVLESIIQRP (94 aa). The tract at residues 460–555 is rbcS-like repeat 3, SSUL3; it reads SSGTATATAT…RVLETIIQRP (96 aa).

The protein belongs to the gamma-class carbonic anhydrase family. Probable homotrimer; zinc is bound between adjacent monomers. Full length protein (M58) interacts with CcmN. The C-terminal RbcS-like domains (SSUL) bind to holo-RuBisCO, as does the M35 short form. It depends on Zn(2+) as a cofactor. Post-translationally, the first amino acid of the short form (equivalent to Val-226) is not seen in Edman degradation, while Ser-230 may be post-translationally modified. Migrates in gels as 2 about equal forms of about 60 and 35 kDa (called M58 and M35). They are probably the result of alternative translation initiation.

The protein localises to the carboxysome. Its subcellular location is the cytoplasm. The enzyme catalyses hydrogencarbonate + H(+) = CO2 + H2O. Carbonic anhydrase (CA) activity is probably under redox control to remain inactive in the cytoplasm. Carbonic anhydrase (CA) activity of full-length protein and N-terminal fragment is inhibited by ethoxyzolamide. N-terminal fragment CA activity is activated under oxidizing conditions and inhibited under reducing conditions. Functionally, functions as a scaffold protein for the assembly of beta-carboxysomes, initiates carboxysome assembly by coalescing RuBisCO (ribulose bisphosphate carboxylase, rbcL-rbcS). Produced as a full-length (M58) and a short form (M35), possibly by alternative translation initiation; probably both forms are required for correct carboxysome assembly and growth. In this strain both forms are equally abundant. Its function is as follows. A moderately active carbonic anhydrase that catalyzes the reversible hydration of carbon dioxide. Essential to photosynthetic carbon dioxide fixation, supplies CO(2) to ribulose bisphosphate carboxylase (RuBisCO) in the carboxysome. Also hydrolyzes COS. In terms of biological role, beta-carboxysome assembly initiates when soluble RuBisCO is condensed into a liquid matrix in a pre-carboxysome by the RbcS-like domains of probably both forms of CcmM. CcmN interacts with the N-terminus of full length CcmM, and then recruits the shell proteins (CcmK) via CcmN's encapsulation peptide. Shell formation requires both CcmK proteins and CcmO. CcmL caps the otherwise elongated carboxysome. Once fully encapsulated carboxysomes are formed, they migrate within the cell probably via interactions with the cytoskeleton. This Nostoc sp. (strain PCC 7120 / SAG 25.82 / UTEX 2576) protein is Carboxysome assembly protein CcmM.